The following is a 363-amino-acid chain: 3-isopropylmalate dehydrogenase (363 aa).

Residue 76-89 (GPKWDTLPGHLRPE) coordinates NAD(+). 4 residues coordinate substrate: Arg-96, Arg-106, Arg-134, and Asp-223. Mg(2+)-binding residues include Asp-223, Asp-247, and Asp-251. 281–293 (GSAPDIAGKGVAN) is an NAD(+) binding site.

Belongs to the isocitrate and isopropylmalate dehydrogenases family. LeuB type 1 subfamily. As to quaternary structure, homodimer. Mg(2+) is required as a cofactor. Mn(2+) serves as cofactor.

The protein localises to the cytoplasm. The catalysed reaction is (2R,3S)-3-isopropylmalate + NAD(+) = 4-methyl-2-oxopentanoate + CO2 + NADH. Its pathway is amino-acid biosynthesis; L-leucine biosynthesis; L-leucine from 3-methyl-2-oxobutanoate: step 3/4. Its function is as follows. Catalyzes the oxidation of 3-carboxy-2-hydroxy-4-methylpentanoate (3-isopropylmalate) to 3-carboxy-4-methyl-2-oxopentanoate. The product decarboxylates to 4-methyl-2 oxopentanoate. The polypeptide is 3-isopropylmalate dehydrogenase (Halalkalibacterium halodurans (strain ATCC BAA-125 / DSM 18197 / FERM 7344 / JCM 9153 / C-125) (Bacillus halodurans)).